Consider the following 372-residue polypeptide: Aminomethyltransferase (372 aa).

This sequence belongs to the GcvT family. The glycine cleavage system is composed of four proteins: P, T, L and H.

It catalyses the reaction N(6)-[(R)-S(8)-aminomethyldihydrolipoyl]-L-lysyl-[protein] + (6S)-5,6,7,8-tetrahydrofolate = N(6)-[(R)-dihydrolipoyl]-L-lysyl-[protein] + (6R)-5,10-methylene-5,6,7,8-tetrahydrofolate + NH4(+). Its function is as follows. The glycine cleavage system catalyzes the degradation of glycine. The chain is Aminomethyltransferase from Burkholderia orbicola (strain MC0-3).